A 591-amino-acid polypeptide reads, in one-letter code: Aspartate--tRNA ligase (591 aa).

Position 176 (Glu-176) interacts with L-aspartate. The segment at 200-203 is aspartate; sequence QILK. Residue Arg-222 coordinates L-aspartate. ATP is bound by residues 222-224 and Gln-231; that span reads RDE. His-450 contributes to the L-aspartate binding site. ATP is bound at residue Glu-484. Arg-491 contacts L-aspartate. 536–539 serves as a coordination point for ATP; sequence GLDR.

The protein belongs to the class-II aminoacyl-tRNA synthetase family. Type 1 subfamily. As to quaternary structure, homodimer.

It is found in the cytoplasm. It catalyses the reaction tRNA(Asp) + L-aspartate + ATP = L-aspartyl-tRNA(Asp) + AMP + diphosphate. Catalyzes the attachment of L-aspartate to tRNA(Asp) in a two-step reaction: L-aspartate is first activated by ATP to form Asp-AMP and then transferred to the acceptor end of tRNA(Asp). This chain is Aspartate--tRNA ligase, found in Listeria monocytogenes serotype 4b (strain F2365).